The sequence spans 534 residues: Peptide chain release factor 3 (534 aa).

Residues 9 to 278 (ARRRTFAIIS…FFIEHAPPPQ (270 aa)) form the tr-type G domain. GTP-binding positions include 18 to 25 (SHPDAGKT), 86 to 90 (DTPGH), and 140 to 143 (NKLD).

It belongs to the TRAFAC class translation factor GTPase superfamily. Classic translation factor GTPase family. PrfC subfamily.

It localises to the cytoplasm. Functionally, increases the formation of ribosomal termination complexes and stimulates activities of RF-1 and RF-2. It binds guanine nucleotides and has strong preference for UGA stop codons. It may interact directly with the ribosome. The stimulation of RF-1 and RF-2 is significantly reduced by GTP and GDP, but not by GMP. This is Peptide chain release factor 3 from Xanthomonas oryzae pv. oryzae (strain PXO99A).